A 790-amino-acid chain; its full sequence is Kinesin-like protein KIN-14D (790 aa).

Disordered stretches follow at residues 1 to 56 (MPLR…DVGS) and 116 to 139 (DKENLSSSLQSAEKRYSDKELDAK). The globular stretch occupies residues 1-66 (MPLRNQNRAP…TEECGKVEFT (66 aa)). Over residues 16 to 33 (VKKEALSSIPFDKRRKET) the composition is skewed to basic and acidic residues. The span at 34–55 (QGTGRRQVLSTVNRQDANSDVG) shows a compositional bias: polar residues. Coiled coils occupy residues 117–316 (KENL…HVVQ) and 347–426 (SLEE…LELK). The segment covering 127–139 (AEKRYSDKELDAK) has biased composition (basic and acidic residues). Residues 428–769 (NIRVFCRVRP…LRFAARVNAC (342 aa)) form the Kinesin motor domain. Position 513-520 (513-520 (GQTGSGKT)) interacts with ATP.

Belongs to the TRAFAC class myosin-kinesin ATPase superfamily. Kinesin family. KIN-14 subfamily. Slightly expressed in anther lobes with pollen mother cells at anther stage 5. Strongly expressed at anther stage 6 in the tapetum and meiotic cells. Also detected in the gynoecium and the ovule.

It localises to the cytoplasm. The protein localises to the cytoskeleton. It is found in the phragmoplast. Functionally, kinesin that supports microtubule movement in an ATP-dependent manner and that functions as a minus-end directed motor as well as a plus-end tracking protein. During mitosis, is involved in early spindle assembly. Participates in the capture of antiparallel interpolar microtubules and helps in generating force to coalign microtubules. In Arabidopsis thaliana (Mouse-ear cress), this protein is Kinesin-like protein KIN-14D.